The primary structure comprises 435 residues: Trigger factor (435 aa).

In terms of domain architecture, PPIase FKBP-type spans 183–263 (GDFINVDVTI…VKTIWQGNMP (81 aa)).

It belongs to the FKBP-type PPIase family. Tig subfamily.

The protein localises to the cytoplasm. The catalysed reaction is [protein]-peptidylproline (omega=180) = [protein]-peptidylproline (omega=0). In terms of biological role, involved in protein export. Acts as a chaperone by maintaining the newly synthesized protein in an open conformation. Functions as a peptidyl-prolyl cis-trans isomerase. The protein is Trigger factor of Protochlamydia amoebophila (strain UWE25).